The primary structure comprises 33 residues: GCKGFGKACKYGADECCKNLVCSKKHKWCKYTL.

3 disulfide bridges follow: Cys-2–Cys-17, Cys-9–Cys-22, and Cys-16–Cys-29.

It belongs to the neurotoxin 10 (Hwtx-1) family. Expressed by the venom gland.

It is found in the secreted. In terms of biological role, voltage-gated sodium channel Nav1.7/SCN9A inhibitor. In Orphnaecus sp. (strain Sibaliw/Philippines) (Tarantula spider), this protein is Mu-theraphotoxin-Osp1a.